The sequence spans 151 residues: Probable flavodoxin 2 (151 aa).

The Flavodoxin-like domain maps to 4 to 144 (ILLVYATMSG…ELINFGRQFA (141 aa)). FMN contacts are provided by residues 10–14 (TMSGN) and 88–119 (VFGSGDTAYEFFCGAVDTLEAKIKERGGDIVL).

Belongs to the flavodoxin family. FMN is required as a cofactor.

Low-potential electron donor to a number of redox enzymes. This chain is Probable flavodoxin 2 (ykuP), found in Bacillus subtilis (strain 168).